The chain runs to 322 residues: 4-hydroxythreonine-4-phosphate dehydrogenase (322 aa).

Threonine 132 provides a ligand contact to substrate. Positions 160, 205, and 260 each coordinate a divalent metal cation. Residues lysine 268, asparagine 277, and arginine 286 each coordinate substrate.

Belongs to the PdxA family. As to quaternary structure, homodimer. It depends on Zn(2+) as a cofactor. The cofactor is Mg(2+). Requires Co(2+) as cofactor.

It is found in the cytoplasm. The enzyme catalyses 4-(phosphooxy)-L-threonine + NAD(+) = 3-amino-2-oxopropyl phosphate + CO2 + NADH. The protein operates within cofactor biosynthesis; pyridoxine 5'-phosphate biosynthesis; pyridoxine 5'-phosphate from D-erythrose 4-phosphate: step 4/5. Functionally, catalyzes the NAD(P)-dependent oxidation of 4-(phosphooxy)-L-threonine (HTP) into 2-amino-3-oxo-4-(phosphooxy)butyric acid which spontaneously decarboxylates to form 3-amino-2-oxopropyl phosphate (AHAP). The sequence is that of 4-hydroxythreonine-4-phosphate dehydrogenase from Xanthomonas campestris pv. campestris (strain 8004).